A 266-amino-acid chain; its full sequence is Non-structural maintenance of chromosomes element 1 homolog (266 aa).

Residues 1–102 are interaction with NSMCE3; the sequence is MQGNTRRTGV…SVSKMASDFA (102 aa). The RING-type; atypical zinc finger occupies 191-232; that stretch reads CNICRSLLIQGQSCETCGIRMHLPCVAKYFQSSSEPHCPHCN. The segment covering 243-252 has biased composition (basic and acidic residues); it reads FDPEKERETG. Positions 243–266 are disordered; sequence FDPEKERETGMSRSNKRPSRSRQH. Residues 256–266 are compositionally biased toward basic residues; the sequence is SNKRPSRSRQH.

This sequence belongs to the NSE1 family. As to quaternary structure, component of the SMC5-SMC6 complex which consists at least of SMC5, SMC6, NSMCE2, NSMCE1, NSMCE4A or EID3 and NSMCE3. NSMCE1, NSMCE4A or EID3 and NSMCE3 probably form a subcomplex that bridges the head domains of the SMC5-SMC6 heterodimer. Interacts with NSMCE3. In terms of processing, ubiquitinated.

It is found in the nucleus. Its subcellular location is the chromosome. The protein resides in the telomere. The enzyme catalyses S-ubiquitinyl-[E2 ubiquitin-conjugating enzyme]-L-cysteine + [acceptor protein]-L-lysine = [E2 ubiquitin-conjugating enzyme]-L-cysteine + N(6)-ubiquitinyl-[acceptor protein]-L-lysine.. RING-type zinc finger-containing E3 ubiquitin ligase that assembles with melanoma antigen protein (MAGE) to catalyze the direct transfer of ubiquitin from E2 ubiquitin-conjugating enzyme to a specific substrate. Within MAGE-RING ubiquitin ligase complex, MAGE stimulates and specifies ubiquitin ligase activity likely through recruitment and/or stabilization of the E2 ubiquitin-conjugating enzyme at the E3:substrate complex. Involved in maintenance of genome integrity, DNA damage response and DNA repair. NSMCE3/MAGEG1 and NSMCE1 ubiquitin ligase are components of SMC5-SMC6 complex and may positively regulate homologous recombination-mediated DNA repair. This Bos taurus (Bovine) protein is Non-structural maintenance of chromosomes element 1 homolog (NSMCE1).